Here is a 764-residue protein sequence, read N- to C-terminus: Phenylalanine--tRNA ligase beta subunit (764 aa).

In terms of domain architecture, tRNA-binding spans 38 to 148 (CIAPKNVVVG…GELVLGKELN (111 aa)). The B5 domain maps to 375–455 (LKDRTLTFQL…RFVGIDNLVS (81 aa)). The Mg(2+) site is built by aspartate 433, aspartate 439, glutamate 442, and glutamate 443. Residues 673–763 (SIYPSSVRDL…LEKEFNARLK (91 aa)) enclose the FDX-ACB domain.

This sequence belongs to the phenylalanyl-tRNA synthetase beta subunit family. Type 1 subfamily. As to quaternary structure, tetramer of two alpha and two beta subunits. Requires Mg(2+) as cofactor.

The protein localises to the cytoplasm. It catalyses the reaction tRNA(Phe) + L-phenylalanine + ATP = L-phenylalanyl-tRNA(Phe) + AMP + diphosphate + H(+). The protein is Phenylalanine--tRNA ligase beta subunit (pheT) of Helicobacter pylori (strain ATCC 700392 / 26695) (Campylobacter pylori).